Here is a 341-residue protein sequence, read N- to C-terminus: Phenylalanine--tRNA ligase alpha subunit (341 aa).

Mg(2+) is bound at residue glutamate 254.

Belongs to the class-II aminoacyl-tRNA synthetase family. Phe-tRNA synthetase alpha subunit type 1 subfamily. Tetramer of two alpha and two beta subunits. Requires Mg(2+) as cofactor.

The protein localises to the cytoplasm. It carries out the reaction tRNA(Phe) + L-phenylalanine + ATP = L-phenylalanyl-tRNA(Phe) + AMP + diphosphate + H(+). In Chlorobium limicola (strain DSM 245 / NBRC 103803 / 6330), this protein is Phenylalanine--tRNA ligase alpha subunit.